Reading from the N-terminus, the 70-residue chain is DNA-directed RNA polymerase subunit omega (70 aa).

This sequence belongs to the RNA polymerase subunit omega family. In terms of assembly, in cyanobacteria the RNAP catalytic core is composed of 2 alpha, 1 beta, 1 beta', 1 gamma and 1 omega subunit. When a sigma factor is associated with the core the holoenzyme is formed, which can initiate transcription.

The catalysed reaction is RNA(n) + a ribonucleoside 5'-triphosphate = RNA(n+1) + diphosphate. Promotes RNA polymerase assembly. Latches the N- and C-terminal regions of the beta' subunit thereby facilitating its interaction with the beta and alpha subunits. This is DNA-directed RNA polymerase subunit omega from Prochlorococcus marinus (strain NATL1A).